A 417-amino-acid polypeptide reads, in one-letter code: UPF0761 membrane protein Veis_3782 (417 aa).

A run of 6 helical transmembrane segments spans residues 54 to 74 (ILAL…FPIF), 111 to 131 (GLGL…ILTI), 151 to 171 (VLIY…SLAL), 192 to 212 (FLFD…LYHY), 226 to 246 (GGLF…LYLG), and 261 to 281 (LPIL…GAVV).

It belongs to the UPF0761 family.

Its subcellular location is the cell inner membrane. The sequence is that of UPF0761 membrane protein Veis_3782 from Verminephrobacter eiseniae (strain EF01-2).